The following is a 338-amino-acid chain: DNA-directed RNA polymerase subunit alpha (338 aa).

The alpha N-terminal domain (alpha-NTD) stretch occupies residues 1 to 226; it reads MLIAQRPTLS…ELFGLARELN (226 aa). The alpha C-terminal domain (alpha-CTD) stretch occupies residues 240–338; it reads DEQLAADLAL…DDAFVEDEQY (99 aa).

This sequence belongs to the RNA polymerase alpha chain family. As to quaternary structure, homodimer. The RNAP catalytic core consists of 2 alpha, 1 beta, 1 beta' and 1 omega subunit. When a sigma factor is associated with the core the holoenzyme is formed, which can initiate transcription.

It catalyses the reaction RNA(n) + a ribonucleoside 5'-triphosphate = RNA(n+1) + diphosphate. DNA-dependent RNA polymerase catalyzes the transcription of DNA into RNA using the four ribonucleoside triphosphates as substrates. This Nocardioides sp. (strain ATCC BAA-499 / JS614) protein is DNA-directed RNA polymerase subunit alpha.